The sequence spans 574 residues: Polyamine aminopropyltransferase (574 aa).

7 helical membrane passes run 22–42, 55–75, 90–110, 144–164, 188–208, 209–229, and 237–257; these read VLLL…EYLL, AAIY…AFAA, LTVA…IGFG, LPYF…PLIA, IGAG…DIQL, AAAL…WRFW, and LLLA…IQGP. The tract at residues 254 to 510 is spermidine synthase; that stretch reads IQGPSWEQQF…ATLDGKDAQH (257 aa). The 249-residue stretch at 257–505 folds into the PABS domain; sequence PSWEQQFNNL…WGWSIATLDG (249 aa). Gln281 contributes to the S-methyl-5'-thioadenosine binding site. Spermidine contacts are provided by His317 and Asp341. S-methyl-5'-thioadenosine is bound by residues Asp360 and 403 to 404; that span reads DA. Asp424 functions as the Proton acceptor in the catalytic mechanism.

The protein belongs to the spermidine/spermine synthase family. In terms of assembly, homodimer or homotetramer.

Its subcellular location is the cell membrane. The enzyme catalyses S-adenosyl 3-(methylsulfanyl)propylamine + putrescine = S-methyl-5'-thioadenosine + spermidine + H(+). Its pathway is amine and polyamine biosynthesis; spermidine biosynthesis; spermidine from putrescine: step 1/1. In terms of biological role, catalyzes the irreversible transfer of a propylamine group from the amino donor S-adenosylmethioninamine (decarboxy-AdoMet) to putrescine (1,4-diaminobutane) to yield spermidine. The chain is Polyamine aminopropyltransferase from Shewanella oneidensis (strain ATCC 700550 / JCM 31522 / CIP 106686 / LMG 19005 / NCIMB 14063 / MR-1).